A 712-amino-acid polypeptide reads, in one-letter code: Osmolarity two-component system protein SSK1 (712 aa).

The interval 73 to 114 (ADNTSSNNTNDNSCRSKSNGAGSGANLSVNSNTKSSVSPTAG) is disordered. Residues 74–85 (DNTSSNNTNDNS) show a composition bias toward low complexity. Positions 87 to 113 (RSKSNGAGSGANLSVNSNTKSSVSPTA) are enriched in polar residues. Phosphoserine occurs at positions 110, 195, 327, 351, 368, and 380. Residues 340-362 (KADLKGKDGNSSPQEFKLITDEE) form a disordered region. The tract at residues 448–468 (EVQRRKEDVTPASPILTSSQT) is disordered. One can recognise a Response regulatory domain in the interval 505–647 (NVLIVEDNVI…WLSKKITEWG (143 aa)). Asp-554 bears the 4-aspartylphosphate mark. A disordered region spans residues 672–712 (KSPQKPIAPSNPHSFKQATSMTPTHSPVRKNSNLSPTQIEL). Ser-673 carries the post-translational modification Phosphoserine. The span at 682–712 (NPHSFKQATSMTPTHSPVRKNSNLSPTQIEL) shows a compositional bias: polar residues. Thr-693 is modified (phosphothreonine). 2 positions are modified to phosphoserine: Ser-703 and Ser-706.

The protein belongs to the SSK1 family. In terms of assembly, interacts with SSK2, SSK22 and YPD1. Post-translationally, the phosphorelay mechanism involves the sequential transfer of a phosphate group from 'His-576' (H1) to 'Asp-1144' (D1) of SLN1, then to 'His-64' (H2) of YPD1 and finally to Asp-554 (D2) of SSK1.

It is found in the cytoplasm. In terms of biological role, final receptor of the SLN1-YPD1-SSK1 two-component regulatory system, which controls activity of the HOG1 pathway in response to changes in the osmolarity of the extracellular environment. Under normal osmotic conditions, maintained in a phosphorylated and inactive state by the phosphorelay intermediate protein YPD1. Under conditions of high osmolarity, the histidine kinase SLN1 is no longer active and the unphosphorylated form of SSK1 interacts with and activates SSK2 and SSK22, two MAPKKKs that further stimulate the PBS2-HOG1 MAPKK-MAPK cascade. Unphosphorylated SSK1 is subsequently degraded by the UBC7-dependent ubiquitin-proteasome system to down-regulate the HOG1 pathway after completion of the osmotic adaptation. The polypeptide is Osmolarity two-component system protein SSK1 (Saccharomyces cerevisiae (strain ATCC 204508 / S288c) (Baker's yeast)).